The following is a 538-amino-acid chain: Pentatricopeptide repeat-containing protein At1g33350 (538 aa).

PPR repeat units follow at residues 87–123 (NTHL…SVPR), 125–159 (NHFI…GFHL), 160–191 (YVVV…MSER), 192–226 (NVVS…DVPS), 227–253 (WNAI…MINE), 259–293 (NEVT…DLSS), 294–324 (DVFV…ASKK), 325–359 (SLTA…NIND), 363–398 (DHIT…GIEP), and 399–433 (RIEH…ADEA). Residues 434 to 509 (IWGSLLNACK…PPGWSRIEID (76 aa)) form a type E motif region.

The protein belongs to the PPR family. PCMP-E subfamily.

The sequence is that of Pentatricopeptide repeat-containing protein At1g33350 (PCMP-E57) from Arabidopsis thaliana (Mouse-ear cress).